The following is a 109-amino-acid chain: MSILKLLPQSFVSSLQKSSWVEYRKMGLYFADLYNNTEANQEVYRRLPFDVLVQRDRRLRVAIDLSLKKQLLPESEWSDNQKDFEFTEMIEKYTEQVERENDLRRSFRE.

It belongs to the UQCRB/QCR7 family. Component of the ubiquinol-cytochrome c oxidoreductase (cytochrome b-c1 complex, complex III, CIII), a multisubunit enzyme composed of 3 respiratory subunits cytochrome b, cytochrome c1 and Rieske protein, 2 core protein subunits, and additional low-molecular weight protein subunits. The complex exists as an obligatory dimer and forms supercomplexes (SCs) in the inner mitochondrial membrane with cytochrome c oxidase (complex IV, CIV).

It localises to the mitochondrion inner membrane. In terms of biological role, component of the ubiquinol-cytochrome c oxidoreductase, a multisubunit transmembrane complex that is part of the mitochondrial electron transport chain which drives oxidative phosphorylation. The respiratory chain contains 3 multisubunit complexes succinate dehydrogenase (complex II, CII), ubiquinol-cytochrome c oxidoreductase (cytochrome b-c1 complex, complex III, CIII) and cytochrome c oxidase (complex IV, CIV), that cooperate to transfer electrons derived from NADH and succinate to molecular oxygen, creating an electrochemical gradient over the inner membrane that drives transmembrane transport and the ATP synthase. The cytochrome b-c1 complex catalyzes electron transfer from ubiquinol to cytochrome c, linking this redox reaction to translocation of protons across the mitochondrial inner membrane, with protons being carried across the membrane as hydrogens on the quinol. In the process called Q cycle, 2 protons are consumed from the matrix, 4 protons are released into the intermembrane space and 2 electrons are passed to cytochrome c. The protein is Probable cytochrome b-c1 complex subunit 7 of Dictyostelium discoideum (Social amoeba).